The chain runs to 416 residues: D-amino acid dehydrogenase (416 aa).

Residue isoleucine 3–tyrosine 17 participates in FAD binding.

It belongs to the DadA oxidoreductase family. Requires FAD as cofactor.

The enzyme catalyses a D-alpha-amino acid + A + H2O = a 2-oxocarboxylate + AH2 + NH4(+). Its function is as follows. Oxidative deamination of D-amino acids. The chain is D-amino acid dehydrogenase from Brucella suis biovar 1 (strain 1330).